A 473-amino-acid polypeptide reads, in one-letter code: MDQHQLDEENQRAALFHSSAPSSSLGADGEEERETVPLLSCKMADDKSDTVQVSEDTAHQISIDPWYQVGFILTTGVNSAYVLGYSASIMVPLGWIGGTCGLILAAAISMYANALLAHLHEVGGKRHIRYRDLAGHIYGRKMYSLTWALQYVNLFMINTGLIILAGQALKAIYVLFRDDGVLKLPYCIALSGFVCALFAFGIPYLSALRIWLGLSTVFSLIYIMIAFVMSLRDGITTPAKDYTIPGSHSDRIFTTIGAVANLVFAYNTGMLPEIQATIRPPVVKNMEKALWFQFTVGSLPLYAVTFMGYWAYGSSTSSYLLNSVKGPIWIKTVANLSAFLQTVIALHIFASPMYEFLDTRFGSGHGGPFAIHNIMFRVGVRGGYLTVNTLVAAMLPFLGDFMSLTGALSTFPLTFVLANHMYLTVKQNKMSIFRKCWHWLNVVGFSCLSVAAAVAAVRLITVDYSTYHLFADM.

Residues 1-11 show a composition bias toward basic and acidic residues; it reads MDQHQLDEENQ. A disordered region spans residues 1–31; that stretch reads MDQHQLDEENQRAALFHSSAPSSSLGADGEE. A run of 11 helical transmembrane segments spans residues 65 to 85, 88 to 108, 145 to 165, 188 to 208, 210 to 230, 252 to 272, 290 to 310, 333 to 353, 378 to 398, 401 to 421, and 437 to 457; these read PWYQ…VLGY, SIMV…AAAI, LTWA…IILA, IALS…LSAL, IWLG…FVMS, IFTT…GMLP, LWFQ…MGYW, VANL…ASPM, VGVR…LPFL, FMSL…ANHM, and WHWL…VAAV.

It belongs to the amino acid/polyamine transporter 2 family. Amino acid/auxin permease (AAAP) (TC 2.A.18.3) subfamily. Expressed in roots, leaf blades and sheaths, stems and young panicle.

Its subcellular location is the cell membrane. Proline transporter that mediates proline transport across the plasma membrane when expressed in a heterologous system (Xenopus oocytes). The chain is Proline transporter 1 (PROT1) from Oryza sativa subsp. japonica (Rice).